The chain runs to 113 residues: Hydrogenase maturation factor HypA (113 aa).

Position 2 (His2) interacts with Ni(2+). 4 residues coordinate Zn(2+): Cys70, Cys73, Cys86, and Cys88.

The protein belongs to the HypA/HybF family.

In terms of biological role, involved in the maturation of [NiFe] hydrogenases. Required for nickel insertion into the metal center of the hydrogenase. This is Hydrogenase maturation factor HypA from Trichormus variabilis (strain ATCC 29413 / PCC 7937) (Anabaena variabilis).